A 264-amino-acid chain; its full sequence is ATP synthase subunit a (264 aa).

6 helical membrane passes run Thr29–Phe49, Ile90–Ile110, Asp134–Ile154, Ile177–Leu197, Leu208–Val228, and Leu235–Val255.

This sequence belongs to the ATPase A chain family. In terms of assembly, F-type ATPases have 2 components, CF(1) - the catalytic core - and CF(0) - the membrane proton channel. CF(1) has five subunits: alpha(3), beta(3), gamma(1), delta(1), epsilon(1). CF(0) has three main subunits: a(1), b(2) and c(9-12). The alpha and beta chains form an alternating ring which encloses part of the gamma chain. CF(1) is attached to CF(0) by a central stalk formed by the gamma and epsilon chains, while a peripheral stalk is formed by the delta and b chains.

It is found in the cell inner membrane. In terms of biological role, key component of the proton channel; it plays a direct role in the translocation of protons across the membrane. This is ATP synthase subunit a from Shewanella loihica (strain ATCC BAA-1088 / PV-4).